The chain runs to 187 residues: Probable cobalt-precorrin-6B C(15)-methyltransferase (decarboxylating) (187 aa).

S-adenosyl-L-methionine contacts are provided by residues Thr15, 39-43, Glu60, and Ala89; that span reads GSCTG.

The protein belongs to the methyltransferase superfamily. Archaeal-type CbiT family.

It catalyses the reaction Co-precorrin-6B + S-adenosyl-L-methionine = Co-precorrin-7 + S-adenosyl-L-homocysteine + CO2. It functions in the pathway cofactor biosynthesis; adenosylcobalamin biosynthesis; cob(II)yrinate a,c-diamide from sirohydrochlorin (anaerobic route): step 8/10. In terms of biological role, catalyzes the methylation of C-15 in cobalt-precorrin-6B followed by the decarboxylation of C-12 to form cobalt-precorrin-7. The chain is Probable cobalt-precorrin-6B C(15)-methyltransferase (decarboxylating) from Halobacterium salinarum (strain ATCC 700922 / JCM 11081 / NRC-1) (Halobacterium halobium).